The sequence spans 366 residues: Anhydro-N-acetylmuramic acid kinase (366 aa).

Residue 12 to 19 coordinates ATP; sequence GTSLDGID.

Belongs to the anhydro-N-acetylmuramic acid kinase family.

It carries out the reaction 1,6-anhydro-N-acetyl-beta-muramate + ATP + H2O = N-acetyl-D-muramate 6-phosphate + ADP + H(+). It participates in amino-sugar metabolism; 1,6-anhydro-N-acetylmuramate degradation. It functions in the pathway cell wall biogenesis; peptidoglycan recycling. Its function is as follows. Catalyzes the specific phosphorylation of 1,6-anhydro-N-acetylmuramic acid (anhMurNAc) with the simultaneous cleavage of the 1,6-anhydro ring, generating MurNAc-6-P. Is required for the utilization of anhMurNAc either imported from the medium or derived from its own cell wall murein, and thus plays a role in cell wall recycling. The protein is Anhydro-N-acetylmuramic acid kinase of Nitrosospira multiformis (strain ATCC 25196 / NCIMB 11849 / C 71).